The sequence spans 253 residues: CD151 antigen (253 aa).

At 1–18 (MGEFNEKKTTCGTVCLKY) the chain is on the cytoplasmic side. Residues Cys-11 and Cys-15 are each lipidated (S-palmitoyl cysteine). The helical transmembrane segment at 19–39 (LLFTYNCCFWLAGLAVMAVGI) threads the bilayer. The Extracellular segment spans residues 40–57 (WTLALKSDYISLLASGTY). Residues 58-78 (LATAYILVVAGAVVMVTGVLG) form a helical membrane-spanning segment. At 79 to 91 (CCATFKERRNLLR) the chain is on the cytoplasmic side. Residues 92 to 112 (LYFILLLIIFLLEIIAGVLAY) form a helical membrane-spanning segment. Residues 113-221 (VYYQQLNTEL…LETFIQEHLR (109 aa)) are Extracellular-facing. N-linked (GlcNAc...) asparagine glycosylation occurs at Asn-159. Residues 222–242 (VIGAVGTGIACVQVFGMIFTC) form a helical membrane-spanning segment. S-palmitoyl cysteine attachment occurs at residues Cys-242 and Cys-243. The Cytoplasmic segment spans residues 243 to 253 (CLYRSLKLEHY).

The protein belongs to the tetraspanin (TM4SF) family. As to quaternary structure, interacts with integrins ITGA3:ITGB1, ITGA5:ITGB1, ITGA3:ITGB1 and ITGA6:ITGB4 and with CD9 and CD181. Interacts (via the second extracellular domain) with integrin ITGAV:ITGB3. Interacts with ITGA3; this interaction modulates ITGA3 glycosylation pattern. Interacts with F11R. Interacts with RAC1 and CDC42; these interactions mediate physical association of RAC1 and CDC42 with integrin adhesion receptor complexes. In terms of processing, palmitoylated. Palmitoylation by ZDHHC2 regulates CD151 expression, association with other tetraspanin family proteins and function in cell adhesion. Post-translationally, ubiquitinated by RNF128 on lysine residues present in the tetraspanin amino terminus via 'Lys-48'-linked ubiquitin leading to proteasomal degradation.

The protein localises to the cell membrane. Its function is as follows. Structural component of specialized membrane microdomains known as tetraspanin-enriched microdomains (TERMs), which act as platforms for receptor clustering and signaling. Plays a role in various cellular and molecular mechanism through its association with both integrin and non-integrin proteins. These interactions facilitate critical cellular functions, including cell-to-cell communication, wound healing, platelet aggregation, trafficking, cell motility, and angiogenesis. Via interaction with JAM-A/F11R and integrin ITGA3:ITGB1, promotes the recruitment of signaling molecules such as RAC1, CDC42 and RhoGTPases to facilitate the polarization of epithelial cells and the reorganization of the actin cytoskeleton, which are critical steps in cell migration process. Regulates the glycosylation pattern of ITGA3:ITGB1 thereby modulating its activity. Plays an essential role in the maintenance of central laminin-binding integrin ITGA6:ITGB4-containing adhesion complexes. Essential for the proper assembly of the glomerular and tubular basement membranes in kidney. Contributes to T-cell activation by modulating integrin signaling leading to activation of downstream targets PTK2 and MAPK1/MAPK3. This is CD151 antigen (CD151) from Chlorocebus aethiops (Green monkey).